Consider the following 717-residue polypeptide: Cell division cycle protein 27 homolog A (717 aa).

Over residues 198 to 208 (TEHIPGENQQD) the composition is skewed to polar residues. 3 disordered regions span residues 198 to 217 (TEHIPGENQQDLKIMQQPGD), 282 to 315 (LSAEAQEESGRRRSARIAARKKNPMSQSFGKDSH), and 342 to 374 (SKEATTSGQSVSDIGSSVDDEEKSNPSESSPDR). The span at 293–304 (RRSARIAARKKN) shows a compositional bias: basic residues. Polar residues predominate over residues 342–356 (SKEATTSGQSVSDIG). TPR repeat units lie at residues 421 to 454 (HWVLMQVGKAYFELQDYFNADSSFTLAHQKYPYA), 489 to 522 (PESWCAVGNCYSLRKDHDTALKMFQRAIQLNERF), 524 to 556 (YAHTLCGHEFAALEEFEDAERCYRKALGIDTRH), 557 to 590 (YNAWYGLGMTYLRQEKFEFAQHQFQLALQINPRS), 592 to 624 (VIMCYYGIALHESKRNDEALMMMEKAVLTDAKN), 625 to 658 (PLPKYYKAHILTSLGDYHKAQKVLEELKECAPQE), and 659 to 692 (SSVHASLGKIYNQLKQYDKAVLHFGIALDLSPSP).

Belongs to the APC3/CDC27 family. The APC/C is composed of at least 10 subunits. Interacts with APC2 and APC10.

The protein localises to the nucleus. The protein operates within protein modification; protein ubiquitination. In terms of biological role, component of the anaphase promoting complex/cyclosome (APC/C), a cell cycle-regulated E3 ubiquitin-protein ligase complex that controls progression through mitosis and the G1 phase of the cell cycle. The APC/C complex controls several key steps in the cell cycle by mediating ubiquitination and subsequent degradation of target proteins such as cyclins. The APC/C complex is required for the female gametophyte development and is involved in several aspect of development by controlling cell division and cell elongation. Involved in the control of endoreduplication. Functionally redundant with CDC27B in the control of gametophyte development. The chain is Cell division cycle protein 27 homolog A (CDC27A) from Arabidopsis thaliana (Mouse-ear cress).